The following is a 619-amino-acid chain: Genetic interactor of prohibitins 3, mitochondrial (619 aa).

Residues 1-55 constitute a mitochondrion transit peptide; the sequence is MLKAQIQTGLQLLQRAAVSHMRPSSCTSMLMRMRVHLAPRALQSQRSLSSSEFSP. The CP-type G domain occupies 162–372; it reads VAAVSDVMHS…IYDVPGFSSA (211 aa).

This sequence belongs to the TRAFAC class YlqF/YawG GTPase family. GEP3 subfamily.

The protein localises to the mitochondrion. In terms of biological role, may be involved in the mitochondrial lipid metabolism. This is Genetic interactor of prohibitins 3, mitochondrial (GEP3) from Clavispora lusitaniae (strain ATCC 42720) (Yeast).